The sequence spans 207 residues: Large ribosomal subunit protein uL4 (207 aa).

The segment at 49 to 78 (HAVKNRSAVRGGGKKPWRQKGTGRARQGSI) is disordered. The segment covering 60–71 (GGKKPWRQKGTG) has biased composition (basic residues).

The protein belongs to the universal ribosomal protein uL4 family. In terms of assembly, part of the 50S ribosomal subunit.

One of the primary rRNA binding proteins, this protein initially binds near the 5'-end of the 23S rRNA. It is important during the early stages of 50S assembly. It makes multiple contacts with different domains of the 23S rRNA in the assembled 50S subunit and ribosome. In terms of biological role, forms part of the polypeptide exit tunnel. This Ligilactobacillus salivarius (strain UCC118) (Lactobacillus salivarius) protein is Large ribosomal subunit protein uL4.